We begin with the raw amino-acid sequence, 55 residues long: Cytochrome b-c1 complex subunit 9 (55 aa).

At 1-15 (MKVIYNTLFKRTSTY) the chain is on the mitochondrial matrix side. A helical transmembrane segment spans residues 16-41 (AVAIIASAFFFERALDVTSVAIFEGI). Residues 42–55 (NKGKLWKDIKGKYE) are Chloroplast intermembrane-facing.

Belongs to the UQCR10/QCR9 family. Component of the ubiquinol-cytochrome c oxidoreductase (cytochrome b-c1 complex, complex III, CIII), a multisubunit enzyme composed of 3 respiratory subunits cytochrome b, cytochrome c1 and Rieske protein, 2 core protein subunits, and additional low-molecular weight protein subunits. The complex exists as an obligatory dimer and forms supercomplexes (SCs) in the inner mitochondrial membrane with cytochrome c oxidase (complex IV, CIV).

Its subcellular location is the mitochondrion inner membrane. Component of the ubiquinol-cytochrome c oxidoreductase, a multisubunit transmembrane complex that is part of the mitochondrial electron transport chain which drives oxidative phosphorylation. The respiratory chain contains 3 multisubunit complexes succinate dehydrogenase (complex II, CII), ubiquinol-cytochrome c oxidoreductase (cytochrome b-c1 complex, complex III, CIII) and cytochrome c oxidase (complex IV, CIV), that cooperate to transfer electrons derived from NADH and succinate to molecular oxygen, creating an electrochemical gradient over the inner membrane that drives transmembrane transport and the ATP synthase. The cytochrome b-c1 complex catalyzes electron transfer from ubiquinol to cytochrome c, linking this redox reaction to translocation of protons across the mitochondrial inner membrane, with protons being carried across the membrane as hydrogens on the quinol. In the process called Q cycle, 2 protons are consumed from the matrix, 4 protons are released into the intermembrane space and 2 electrons are passed to cytochrome c. The sequence is that of Cytochrome b-c1 complex subunit 9 (ox) from Drosophila melanogaster (Fruit fly).